Reading from the N-terminus, the 89-residue chain is Pigment dispersing factor homolog pdf-2 (89 aa).

The signal sequence occupies residues methionine 1–alanine 27.

Its function is as follows. Probable ligand of isoforms a and b of the calcitonin receptor-like protein, pdfr-1, a G-protein coupled receptor. May not signal through isoform c of pdfr-1. Involved in locomotion; may play a role in circadian rhythms of locomotor activity. Modulator of egg-laying. This chain is Pigment dispersing factor homolog pdf-2, found in Caenorhabditis elegans.